Here is a 900-residue protein sequence, read N- to C-terminus: Minor teichoic acid biosynthesis protein GgaB (900 aa).

This sequence belongs to the glycosyltransferase 2 family.

It participates in cell wall biogenesis; poly(glucopyranosyl N-acetylgalactosamine 1-phosphate) teichoic acid biosynthesis. In terms of biological role, involved in the biosynthesis of galactosamine-containing minor teichoic acid, a non-essential cell wall polymer in B.subtilis 168. The polypeptide is Minor teichoic acid biosynthesis protein GgaB (ggaB) (Bacillus subtilis (strain 168)).